The following is a 754-amino-acid chain: Protein neuralized (754 aa).

The NHR 1 domain occupies 106–260; the sequence is PLQFHSVHGD…NCTGIEFLDS (155 aa). The segment covering 280–297 has biased composition (low complexity); the sequence is QQQQMPQPAANASSALNS. A disordered region spans residues 280–308; sequence QQQQMPQPAANASSALNSHHPHQQSRRSL. Ser-338 and Ser-341 each carry phosphoserine. One can recognise an NHR 2 domain in the interval 368-523; sequence PVPFHNTKGR…STQSLRMFRQ (156 aa). The segment at 701–742 adopts an RING-type zinc-finger fold; that stretch reads CTICYENPIDSVLYMCGHMCMCYDCAIEQWRGVGGGQCPLCR.

The protein resides in the nucleus. Involved in neurogenesis. Interacts with other neurogenic proteins in the specification of the neuroblast versus epidermoblast cell fate. This chain is Protein neuralized (neur), found in Drosophila melanogaster (Fruit fly).